The following is a 387-amino-acid chain: MTNCTDEDLDNYLLNQVDLRHRQVSKCVEDVQKIIKDLTTEVSSKDARFQSIANAGVHNASLKDQPALMSKWSALLRGRCAYNPAIQVLSPTLYLISVPLQGLMGYKERRTRQWRYYTLTGSRLLSPVREPEKLHQWLELESFVNPSQEWHDARMTIEGDIVPAKVVNVFKDLLETSIKTRGLTNKVSVLESVGTAVRVAVETSEAQIEVKLVPTVELMNYWPKRARWPRLFRRWPSTERARCIKSFGFNLMASSNYHWLLSFSRAEQVLLSNIDEDGGCRRKCYRVVRQLKEDGWCPGSKPVITAFHLQTLLFWTCEKYPCTRDWKDFRGCVLRLVQKLHKCVSQHYLRHYFIRSHNLLKYSNTNELDEVAKKINHFLENPGTYIH.

The protein belongs to the mab-21 family.

The polypeptide is Protein mab-21-like 3 (mab21L3) (Danio rerio (Zebrafish)).